We begin with the raw amino-acid sequence, 275 residues long: Large ribosomal subunit protein uL2 (275 aa).

A disordered region spans residues 220–275; that stretch reads QTRGAAMNPVDHPHGGGEGKTGSSGHPVSPWGMPAKGFKTRKKKASDKLIISRRKK. The span at 257–275 shows a compositional bias: basic residues; the sequence is FKTRKKKASDKLIISRRKK.

Belongs to the universal ribosomal protein uL2 family. As to quaternary structure, part of the 50S ribosomal subunit. Forms a bridge to the 30S subunit in the 70S ribosome.

In terms of biological role, one of the primary rRNA binding proteins. Required for association of the 30S and 50S subunits to form the 70S ribosome, for tRNA binding and peptide bond formation. It has been suggested to have peptidyltransferase activity; this is somewhat controversial. Makes several contacts with the 16S rRNA in the 70S ribosome. The protein is Large ribosomal subunit protein uL2 of Wolinella succinogenes (strain ATCC 29543 / DSM 1740 / CCUG 13145 / JCM 31913 / LMG 7466 / NCTC 11488 / FDC 602W) (Vibrio succinogenes).